The primary structure comprises 175 residues: Nascent polypeptide-associated complex subunit beta (175 aa).

2 disordered regions span residues 1–36 (MDKEKLAKLQSQVRIGGKGTPRRKVVKKSVTSSQGD) and 129–175 (RQAA…EELE). Residues 34–101 (QGDDRKLQAA…GQTKELTELV (68 aa)) enclose the NAC-A/B domain. The span at 149 to 163 (EGDDEIPDLVDNFDE) shows a compositional bias: acidic residues. Basic and acidic residues predominate over residues 164-175 (AEVKKSDLEELE).

The protein belongs to the NAC-beta family. As to quaternary structure, part of the nascent polypeptide-associated complex (NAC), consisting of EGD2 and EGD1. NAC associates with ribosomes via EGD1.

The protein localises to the cytoplasm. Its subcellular location is the nucleus. In terms of biological role, component of the nascent polypeptide-associated complex (NAC), a dynamic component of the ribosomal exit tunnel, protecting the emerging polypeptides from interaction with other cytoplasmic proteins to ensure appropriate nascent protein targeting. The NAC complex also promotes mitochondrial protein import by enhancing productive ribosome interactions with the outer mitochondrial membrane and blocks the inappropriate interaction of ribosomes translating non-secretory nascent polypeptides with translocation sites in the membrane of the endoplasmic reticulum. EGD1 may act as a transcription factor that exert a negative effect on the expression of several genes that are transcribed by RNA polymerase II. The chain is Nascent polypeptide-associated complex subunit beta (EGD1) from Cryptococcus neoformans var. neoformans serotype D (strain B-3501A) (Filobasidiella neoformans).